Consider the following 633-residue polypeptide: Probable potassium transport system protein Kup (633 aa).

The next 12 helical transmembrane spans lie at 21-41 (LAVGSVGVVYGDIGTSPLYAF), 61-81 (LVSLMFWALTIIVTMKYVLFL), 107-127 (TAVLMLLGLLGAALFLGDAMI), 145-165 (PTLSDYIVPISVAILALLFAI), 176-196 (FFGPITAIWFIVMGLAGIMHI), 219-239 (GFLGVVVLGAVFLTVTGAEAL), 255-275 (WFVLVFPSLTLNYLGQGALVL), 293-313 (ALLPVVILATMATIIASQAVI), 345-365 (IFLPSVNAILFFGVIFLVLSF), 371-391 (LATAYGISVTGAMVVTSIMAF), 402-422 (LPMAIAVLTPLLLLEFVFLGA), and 427-447 (IHDGGYVPVLIATAFTVIMWT).

It belongs to the HAK/KUP transporter (TC 2.A.72) family.

It localises to the cell inner membrane. It carries out the reaction K(+)(in) + H(+)(in) = K(+)(out) + H(+)(out). Transport of potassium into the cell. Likely operates as a K(+):H(+) symporter. The chain is Probable potassium transport system protein Kup from Rhizobium rhizogenes (strain K84 / ATCC BAA-868) (Agrobacterium radiobacter).